We begin with the raw amino-acid sequence, 278 residues long: NAD kinase (278 aa).

The Proton acceptor role is filled by D56. NAD(+)-binding positions include D56–G57, N132–E133, R158, D160, and T171–S176.

This sequence belongs to the NAD kinase family. Requires a divalent metal cation as cofactor.

It is found in the cytoplasm. It catalyses the reaction NAD(+) + ATP = ADP + NADP(+) + H(+). In terms of biological role, involved in the regulation of the intracellular balance of NAD and NADP, and is a key enzyme in the biosynthesis of NADP. Catalyzes specifically the phosphorylation on 2'-hydroxyl of the adenosine moiety of NAD to yield NADP. The protein is NAD kinase of Streptococcus agalactiae serotype III (strain NEM316).